Consider the following 150-residue polypeptide: uncharacterized protein (150 aa).

This is an uncharacterized protein from Rickettsia prowazekii (strain Madrid E).